We begin with the raw amino-acid sequence, 494 residues long: Caspase-8 (494 aa).

Residues 1–242 (MAGSNLLIHL…QEIESDNQQS (242 aa)) constitute a propeptide that is removed on maturation. Catalysis depends on residues His-345 and Cys-386. Residues 401–410 (RIDVTTVSPD) constitute a propeptide that is removed on maturation.

This sequence belongs to the peptidase C14A family. As to quaternary structure, heterotetramer that consists of two anti-parallel arranged heterodimers, each one formed by a 15 kDa (caspase-8 subunit p15) and a 10 kDa (caspase-8 subunit p10) subunit. Interacts (via N-terminus) with Diap2; likely to bind Diap2 simultaneously with Fadd to form a trimeric complex. Interacts with Dark (via N-terminus). Post-translationally, polyubiquitinated by Diap2 following activation of the immune deficiency (Imd) pathway. Constitutively expressed in fat bodies of larvae and adults.

It is found in the cytoplasm. It carries out the reaction Strict requirement for Asp at position P1 and has a preferred cleavage sequence of (Leu/Asp/Val)-Glu-Thr-Asp-|-(Gly/Ser/Ala).. Functionally, effector of the programmed cell death (PCD) activators rpr, grim and hid. May play an apoptotic role in the germline as well as soma. Fadd interacts with Dredd to promote cleavage of Dredd and is necessary and sufficient for enhancing Dredd-induced apoptosis. Plays a role in the innate immune response. Required for resistance to Gram-negative bacterial infection. Diap2-mediated ubiquitination of Dredd is critical for processing of imd and rel and the subsequent expression of antimicrobial genes such as DptA. The polypeptide is Caspase-8 (Drosophila melanogaster (Fruit fly)).